We begin with the raw amino-acid sequence, 73 residues long: Dipeptidyl peptidase 3 (73 aa).

This sequence belongs to the peptidase M49 family. Zn(2+) is required as a cofactor.

The protein resides in the membrane. The catalysed reaction is Release of an N-terminal dipeptide from a peptide comprising four or more residues, with broad specificity. Also acts on dipeptidyl 2-naphthylamides.. Its function is as follows. Degrades neuropeptide proctolin (RYLPT) by cleavage between Tyr and Leu residues. The sequence is that of Dipeptidyl peptidase 3 from Blaberus craniifer (Death's head cockroach).